The chain runs to 745 residues: Phosphoribosylformylglycinamidine synthase subunit PurL (745 aa).

The active site involves histidine 54. The ATP site is built by tyrosine 57 and lysine 96. Mg(2+) is bound at residue glutamate 98. Substrate-binding positions include 99 to 102 (SHNH) and arginine 121. The Proton acceptor role is filled by histidine 100. Aspartate 122 contributes to the Mg(2+) binding site. Glutamine 250 contacts substrate. Residue aspartate 278 coordinates Mg(2+). 322–324 (ESQ) serves as a coordination point for substrate. Residues aspartate 503 and glycine 540 each coordinate ATP. Residue asparagine 541 participates in Mg(2+) binding. Serine 543 lines the substrate pocket.

The protein belongs to the FGAMS family. In terms of assembly, monomer. Part of the FGAM synthase complex composed of 1 PurL, 1 PurQ and 2 PurS subunits.

Its subcellular location is the cytoplasm. The enzyme catalyses N(2)-formyl-N(1)-(5-phospho-beta-D-ribosyl)glycinamide + L-glutamine + ATP + H2O = 2-formamido-N(1)-(5-O-phospho-beta-D-ribosyl)acetamidine + L-glutamate + ADP + phosphate + H(+). Its pathway is purine metabolism; IMP biosynthesis via de novo pathway; 5-amino-1-(5-phospho-D-ribosyl)imidazole from N(2)-formyl-N(1)-(5-phospho-D-ribosyl)glycinamide: step 1/2. Its function is as follows. Part of the phosphoribosylformylglycinamidine synthase complex involved in the purines biosynthetic pathway. Catalyzes the ATP-dependent conversion of formylglycinamide ribonucleotide (FGAR) and glutamine to yield formylglycinamidine ribonucleotide (FGAM) and glutamate. The FGAM synthase complex is composed of three subunits. PurQ produces an ammonia molecule by converting glutamine to glutamate. PurL transfers the ammonia molecule to FGAR to form FGAM in an ATP-dependent manner. PurS interacts with PurQ and PurL and is thought to assist in the transfer of the ammonia molecule from PurQ to PurL. The sequence is that of Phosphoribosylformylglycinamidine synthase subunit PurL from Helicobacter hepaticus (strain ATCC 51449 / 3B1).